Consider the following 204-residue polypeptide: Thymidylate kinase (204 aa).

9–16 is an ATP binding site; sequence GLDGAGKS.

This sequence belongs to the thymidylate kinase family.

It carries out the reaction dTMP + ATP = dTDP + ADP. Phosphorylation of dTMP to form dTDP in both de novo and salvage pathways of dTTP synthesis. This chain is Thymidylate kinase, found in Francisella philomiragia subsp. philomiragia (strain ATCC 25017 / CCUG 19701 / FSC 153 / O#319-036).